The sequence spans 664 residues: Frizzled-3 (664 aa).

The N-terminal stretch at 1–16 (MAAYLISFIWVSVILA) is a signal peptide. The Extracellular segment spans residues 17–204 (QKSMGHSLFA…REELSFARYF (188 aa)). An FZ domain is found at 22–135 (HSLFACEPIT…CSRFPDCDEP (114 aa)). Cystine bridges form between Cys-27–Cys-88, Cys-35–Cys-81, Cys-72–Cys-109, Cys-98–Cys-132, and Cys-102–Cys-126. The N-linked (GlcNAc...) asparagine glycan is linked to Asn-41. A helical membrane pass occupies residues 205 to 225 (IGVISIVCLSATLFTFLTFLI). The Cytoplasmic segment spans residues 226–236 (DVTRFRYPERP). Residues 237–257 (IIFYAVCYMMVSLIFFIGFLL) traverse the membrane as a helical segment. Residues 258 to 287 (EDKVACNGANPSQYKASTVTQGSHNKACTM) lie on the Extracellular side of the membrane. The chain crosses the membrane as a helical span at residues 288–308 (LFMVLYFFTMAGSVWWVILTI). Residues 309 to 327 (TWFLAAVPKWGSEAIEKKA) lie on the Cytoplasmic side of the membrane. The helical transmembrane segment at 328 to 348 (LLFHASAWGIPGTLTIILLAM) threads the bilayer. Residues 349–373 (NKIEGDNISGVCFVGLYDVHALRYF) are Extracellular-facing. Asn-355 is a glycosylation site (N-linked (GlcNAc...) asparagine). The chain crosses the membrane as a helical span at residues 374–394 (VLAPLCLDVVVGVSLLLAGII). Residues 395–419 (SLNRVRIEIPLEKENQDKLVKFMIR) are Cytoplasmic-facing. The helical transmembrane segment at 420-440 (IGVFSILYLVPLLVVIGCYFY) threads the bilayer. Topologically, residues 441 to 476 (EQAYRGVWETTWVQERCREYHIPCPYKVTQTSRPDL) are extracellular. Residues 477-497 (ILFLMKYLMLLVVGIPSVFWV) form a helical membrane-spanning segment. Residues 498–664 (GSKKTCFEWA…RVIEADATSA (167 aa)) are Cytoplasmic-facing. Residues 501–506 (KTCFEW) carry the Lys-Thr-X-X-X-Trp motif, mediates interaction with the PDZ domain of Dvl family members motif. The disordered stretch occupies residues 537–664 (RDPNTPIVRK…RVIEADATSA (128 aa)). Composition is skewed to polar residues over residues 549 to 564 (GTST…STQL) and 573 to 585 (KAGS…SSYH).

Belongs to the G-protein coupled receptor Fz/Smo family. Expression restricted to the early nervous system.

The protein resides in the membrane. The protein localises to the cell membrane. It localises to the cell surface. Its subcellular location is the apical cell membrane. Functionally, receptor for Wnt proteins. Most of frizzled receptors are coupled to the beta-catenin canonical signaling pathway, which leads to the activation of disheveled proteins, inhibition of GSK-3 kinase, nuclear accumulation of beta-catenin and activation of Wnt target genes. A second signaling pathway involving PKC and calcium fluxes has been seen for some family members, but it is not yet clear if it represents a distinct pathway or if it can be integrated in the canonical pathway, as PKC seems to be required for Wnt-mediated inactivation of GSK-3 kinase. Both pathways seem to involve interactions with G-proteins. Activated by Wnt8. Involved in transduction and intercellular transmission of polarity information during tissue morphogenesis and/or in differentiated tissues. Plays a role in controlling early axon growth and guidance processes necessary for the formation of a subset of central and peripheral major fiber tracts. Involved in the migration of cranial neural crest cells. May also be implicated in the transmission of sensory information from the trunk and limbs to the brain. Controls commissural sensory axons guidance after midline crossing along the anterior-posterior axis in the developing spinal cord in a Wnt-dependent signaling pathway. Together with FZD6, is involved in the neural tube closure and plays a role in the regulation of the establishment of planar cell polarity (PCP). Promotes neurogenesis by maintaining sympathetic neuroblasts within the cell cycle in a beta-catenin-dependent manner. This Xenopus laevis (African clawed frog) protein is Frizzled-3 (fzd3).